Consider the following 301-residue polypeptide: 2-oxo-3-(phosphooxy)propyl 3-oxoalkanoate synthase (301 aa).

The protein belongs to the AfsA family.

It carries out the reaction a medium-chain 3-oxoacyl-[ACP] + dihydroxyacetone phosphate = a (4-alkanoyl-5-oxo-2,5-dihydrofuran-3-yl)methyl phosphate + holo-[ACP] + H2O. Its function is as follows. Involved in the biosynthesis of A factor (2-isocapryloyl-3R-hydroxymethyl-gamma-butyrolactone), a gamma-butyrolactone autoregulator that triggers secondary metabolism and morphogenesis in Streptomyces. Catalyzes beta-ketoacyl transfer from 8-methyl-3-oxononanoyl-acyl carrier protein (ACP) to the hydroxyl group of dihydroxyacetone phosphate (DHAP), thus producing an 8-methyl-3-oxononanoyl-DHAP ester. The polypeptide is 2-oxo-3-(phosphooxy)propyl 3-oxoalkanoate synthase (Streptomyces griseus).